The following is a 518-amino-acid chain: Bifunctional methyltransferase (518 aa).

The segment at 1 to 300 is hemK; that stretch reads MQYSIKQILS…SHNRVIEISP (300 aa). The segment at 1–302 is RF MTase; the sequence is MQYSIKQILS…NRVIEISPIN (302 aa). S-adenosyl-L-methionine-binding positions include 140-144, Asp163, Trp192, Asn207, Glu347, Glu372, Asn399, and Asp421; that span reads GTGSG. Residue 207-210 coordinates substrate; the sequence is NPPY. Positions 301 to 518 are tRNA (guanine-N(7)-)-methyltransferase; it reads INLNRSYARR…MILQHALTDH (218 aa). The segment at 305–518 is tRNA MTase; the sequence is RSYARRIGKS…MILQHALTDH (214 aa). Asp421 is a catalytic residue. Substrate is bound by residues Lys425 and Asp457.

It in the C-terminal section; belongs to the class I-like SAM-binding methyltransferase superfamily. TrmB family. This sequence in the N-terminal section; belongs to the protein N5-glutamine methyltransferase family. PrmC subfamily.

It carries out the reaction L-glutaminyl-[peptide chain release factor] + S-adenosyl-L-methionine = N(5)-methyl-L-glutaminyl-[peptide chain release factor] + S-adenosyl-L-homocysteine + H(+). The enzyme catalyses guanosine(46) in tRNA + S-adenosyl-L-methionine = N(7)-methylguanosine(46) in tRNA + S-adenosyl-L-homocysteine. Functionally, methylates the class 1 translation termination release factors RF1/PrfA and RF2/PrfB on the glutamine residue of the universally conserved GGQ motif. In terms of biological role, catalyzes the formation of N(7)-methylguanine at position 46 (m7G46) in tRNA. This Rickettsia prowazekii (strain Madrid E) protein is Bifunctional methyltransferase (prmC/trmB).